The primary structure comprises 278 residues: Large ribosomal subunit protein uL2 (278 aa).

Positions 226–278 (MNPIDHPHGGGEGKTAAGRHPVSPWGTPSKGSRTRKNKRTSNMIVRSRYSKKG) are disordered.

The protein belongs to the universal ribosomal protein uL2 family. As to quaternary structure, part of the 50S ribosomal subunit. Forms a bridge to the 30S subunit in the 70S ribosome.

Functionally, one of the primary rRNA binding proteins. Required for association of the 30S and 50S subunits to form the 70S ribosome, for tRNA binding and peptide bond formation. It has been suggested to have peptidyltransferase activity; this is somewhat controversial. Makes several contacts with the 16S rRNA in the 70S ribosome. The polypeptide is Large ribosomal subunit protein uL2 (Nitrosomonas europaea (strain ATCC 19718 / CIP 103999 / KCTC 2705 / NBRC 14298)).